A 343-amino-acid chain; its full sequence is Nuclear hormone receptor family member nhr-167 (343 aa).

Residues 5–81 (HQKCAVCGRF…VGMTLPSYLL (77 aa)) constitute a DNA-binding region (nuclear receptor). 2 NR C4-type zinc fingers span residues 8-28 (CAVCGRFTTEFNYSVLSCNSC) and 45-64 (CFRGERCFEKTPYIFKCTSC). Residues 101–339 (THNKRMDSLF…KKLVKDGIEA (239 aa)) form the NR LBD domain.

Belongs to the nuclear hormone receptor family.

It is found in the nucleus. Orphan nuclear receptor. This is Nuclear hormone receptor family member nhr-167 (nhr-167) from Caenorhabditis elegans.